Here is a 465-residue protein sequence, read N- to C-terminus: ATP synthase subunit beta (465 aa).

152–159 (GGAGVGKT) is a binding site for ATP.

This sequence belongs to the ATPase alpha/beta chains family. F-type ATPases have 2 components, CF(1) - the catalytic core - and CF(0) - the membrane proton channel. CF(1) has five subunits: alpha(3), beta(3), gamma(1), delta(1), epsilon(1). CF(0) has three main subunits: a(1), b(2) and c(9-12). The alpha and beta chains form an alternating ring which encloses part of the gamma chain. CF(1) is attached to CF(0) by a central stalk formed by the gamma and epsilon chains, while a peripheral stalk is formed by the delta and b chains.

Its subcellular location is the cell membrane. It carries out the reaction ATP + H2O + 4 H(+)(in) = ADP + phosphate + 5 H(+)(out). Its function is as follows. Produces ATP from ADP in the presence of a proton gradient across the membrane. The catalytic sites are hosted primarily by the beta subunits. This chain is ATP synthase subunit beta, found in Desulfitobacterium hafniense (strain Y51).